Reading from the N-terminus, the 247-residue chain is MRNKKKLHGFFNFVRWLLVVLLIIVGLALVFNKPIRNAFIAHQSNHYQISRVSKKTIEKNKKSKTSYDFSSVKSISTESILSAQTKSHNLPVIGGIAIPDVEINLPIFKGLGNTELSYGAGTMKENQIMGGQNNYALASHHVFGLTGSSKMLFSPLEHAKKGMKVYLTDKSKVYTYTITEISKVTPEHVEVIDDTPGKSQLTLVTCTDPEATERIIVHAELEKTGEFSTADESILKAFSKKYNQINL.

Residues methionine 1–glycine 9 are Cytoplasmic-facing. A helical membrane pass occupies residues phenylalanine 10 to valine 30. The Extracellular portion of the chain corresponds to phenylalanine 31 to leucine 247. Histidine 140 serves as the catalytic Proton donor/acceptor. Catalysis depends on cysteine 206, which acts as the Acyl-thioester intermediate.

Belongs to the bacterial sortase family. Class A subfamily.

It localises to the cell membrane. Its function is as follows. Transpeptidase that anchors surface proteins to the cell wall. Recognizes and modifies its substrate by proteolytic cleavage of a C-terminal sorting signal. Following cleavage, a covalent intermediate is formed via a thioester bond between the sortase and its substrate, which is then transferred and covalently attached to the cell wall. This sortase recognizes a Leu-Pro-x-Thr-Gly (LPXTG) motif, which is cleaved by the sortase between the threonine and glycine residues. Essential for adherence to eukaryotic cells and for binding to fibronectin and fibrinogen. The sequence is that of Sortase A from Streptococcus agalactiae serotype III (strain NEM316).